A 113-amino-acid chain; its full sequence is Replication initiation control protein YabA (113 aa).

Positions 88, 90, 104, and 107 each coordinate Zn(2+).

This sequence belongs to the YabA family. As to quaternary structure, homotetramer. Interacts with both DnaA and DnaN, acting as a bridge between these two proteins. It depends on Zn(2+) as a cofactor.

The protein resides in the cytoplasm. Its subcellular location is the nucleoid. Involved in control of chromosome replication initiation. Inhibits the cooperative binding of DnaA to the oriC region, thus negatively regulating initiation of chromosome replication. Inhibits the ability of DnaA-ATP to form a helix on DNA; does not disassemble preformed DnaA-DNA helices. Decreases the residence time of DnaA on the chromosome at its binding sites (oriC, replication forks and promoter-binding sites). Tethers DnaA to the replication machinery via the DNA polymerase beta sliding clamp subunit (dnaN). Associates with oriC and other DnaA targets on the chromosome in a DnaA-dependent manner. The polypeptide is Replication initiation control protein YabA (Staphylococcus saprophyticus subsp. saprophyticus (strain ATCC 15305 / DSM 20229 / NCIMB 8711 / NCTC 7292 / S-41)).